The primary structure comprises 483 residues: Glutamate--tRNA ligase (483 aa).

The short motif at 11–21 is the 'HIGH' region element; it reads PSPTGHLHIGN. Residues Cys108, Cys110, Cys135, and His137 each contribute to the Zn(2+) site. The short motif at 252–256 is the 'KMSKS' region element; the sequence is KLSKR. Lys255 provides a ligand contact to ATP.

This sequence belongs to the class-I aminoacyl-tRNA synthetase family. Glutamate--tRNA ligase type 1 subfamily. In terms of assembly, monomer. Zn(2+) serves as cofactor.

It localises to the cytoplasm. It carries out the reaction tRNA(Glu) + L-glutamate + ATP = L-glutamyl-tRNA(Glu) + AMP + diphosphate. Its function is as follows. Catalyzes the attachment of glutamate to tRNA(Glu) in a two-step reaction: glutamate is first activated by ATP to form Glu-AMP and then transferred to the acceptor end of tRNA(Glu). This chain is Glutamate--tRNA ligase, found in Bacillus pumilus (strain SAFR-032).